The primary structure comprises 351 residues: Protein Wnt-8b (351 aa).

The signal sequence occupies residues 1 to 22 (MFLSKPSVYICLFTCVLQLSHS). Cysteines 54 and 65 form a disulfide. Asn-103 carries N-linked (GlcNAc...) asparagine glycosylation. Disulfide bonds link Cys-104–Cys-112, Cys-114–Cys-132, Cys-180–Cys-194, Cys-182–Cys-189, Cys-256–Cys-294, Cys-272–Cys-287, Cys-291–Cys-333, Cys-309–Cys-324, Cys-311–Cys-321, and Cys-316–Cys-317. Ser-186 carries the O-palmitoleoyl serine lipid modification. Asn-259 is a glycosylation site (N-linked (GlcNAc...) asparagine).

This sequence belongs to the Wnt family. Post-translationally, palmitoleoylation is required for efficient binding to frizzled receptors. Depalmitoleoylation leads to Wnt signaling pathway inhibition. In terms of processing, proteolytic processing by TIKI1 and TIKI2 promotes oxidation and formation of large disulfide-bond oligomers, leading to inactivation of WNT8B. As to expression, expression is restricted to the brain, and more specifically to the forebrain.

The protein resides in the secreted. Its subcellular location is the extracellular space. It localises to the extracellular matrix. Functionally, ligand for members of the frizzled family of seven transmembrane receptors. May play an important role in the development and differentiation of certain forebrain structures, notably the hippocampus. This Homo sapiens (Human) protein is Protein Wnt-8b (WNT8B).